The following is a 191-amino-acid chain: UPF0149 protein VCM66_2399 (191 aa).

This sequence belongs to the UPF0149 family.

The protein is UPF0149 protein VCM66_2399 of Vibrio cholerae serotype O1 (strain M66-2).